We begin with the raw amino-acid sequence, 210 residues long: Chaperone protein TorD (210 aa).

It belongs to the TorD/DmsD family. TorD subfamily.

It localises to the cytoplasm. Functionally, involved in the biogenesis of TorA. Acts on TorA before the insertion of the molybdenum cofactor and, as a result, probably favors a conformation of the apoenzyme that is competent for acquiring the cofactor. The chain is Chaperone protein TorD from Salmonella choleraesuis (strain SC-B67).